The following is a 328-amino-acid chain: Ribosomal RNA small subunit methyltransferase C (328 aa).

It belongs to the methyltransferase superfamily. RsmC family. As to quaternary structure, monomer.

It is found in the cytoplasm. It catalyses the reaction guanosine(1207) in 16S rRNA + S-adenosyl-L-methionine = N(2)-methylguanosine(1207) in 16S rRNA + S-adenosyl-L-homocysteine + H(+). Specifically methylates the guanine in position 1207 of 16S rRNA in the 30S particle. The chain is Ribosomal RNA small subunit methyltransferase C from Pasteurella multocida (strain Pm70).